We begin with the raw amino-acid sequence, 29 residues long: Cytochrome b6-f complex subunit 8 (29 aa).

Residues 3–23 (IDVLGWVALLVVFTWSIAMVV) form a helical membrane-spanning segment.

It belongs to the PetN family. In terms of assembly, the 4 large subunits of the cytochrome b6-f complex are cytochrome b6, subunit IV (17 kDa polypeptide, PetD), cytochrome f and the Rieske protein, while the 4 small subunits are PetG, PetL, PetM and PetN. The complex functions as a dimer.

It localises to the cellular thylakoid membrane. In terms of biological role, component of the cytochrome b6-f complex, which mediates electron transfer between photosystem II (PSII) and photosystem I (PSI), cyclic electron flow around PSI, and state transitions. This Mastigocladus laminosus (Fischerella sp.) protein is Cytochrome b6-f complex subunit 8.